Consider the following 88-residue polypeptide: Small ribosomal subunit protein bS20 (88 aa).

Over residues 1 to 21 (MANSKSAKKRALQSEKRRQHN) the composition is skewed to basic residues. The interval 1–27 (MANSKSAKKRALQSEKRRQHNASRSSM) is disordered.

Belongs to the bacterial ribosomal protein bS20 family.

Binds directly to 16S ribosomal RNA. The protein is Small ribosomal subunit protein bS20 of Shewanella piezotolerans (strain WP3 / JCM 13877).